A 302-amino-acid polypeptide reads, in one-letter code: Heme A synthase (302 aa).

The Cytoplasmic portion of the chain corresponds to 1 to 8 (MFRKQNLK). The helical transmembrane segment at 9–29 (WLGVLATIIMTFVQLGGALVT) threads the bilayer. Residues 30 to 67 (KTGSEDGCGSSWPLCNGALLPENLPIQTIIELSHRAVS) lie on the Extracellular side of the membrane. Cys-37 and Cys-44 are oxidised to a cystine. The active site involves Glu-60. His-63 contacts heme o. Residues 68-88 (AISLIVVLWLVITAWKNIGYI) traverse the membrane as a helical segment. Over 89 to 93 (KEIKP) the chain is Cytoplasmic. The chain crosses the membrane as a helical span at residues 94–114 (LSIISVGFLLVQALVGAAAVI). The Extracellular portion of the chain corresponds to 115–125 (WQQNPYVLALH). A heme o-binding site is contributed by His-125. A helical membrane pass occupies residues 126-146 (FGISLISFSSVFLMTLIIFSI). Topologically, residues 147–161 (DKKYEADILFIHKPL) are cytoplasmic. The helical transmembrane segment at 162–182 (RILTWLMAIIVYLTIYTGALV) threads the bilayer. The Extracellular segment spans residues 183-215 (RHTKSSLAYGAWPIPFDDIVPHNAHDWVQFSHR). Residue His-214 coordinates heme b. The helical transmembrane segment at 216–236 (GMAFITFIWIMITFIHAIKNY) threads the bilayer. At 237–244 (SDNRTVRY) the chain is on the cytoplasmic side. Residues 245-265 (GYTASFILVILQVITGALSVI) traverse the membrane as a helical segment. Over 266-270 (TNVNL) the chain is Extracellular. Residues 271 to 291 (IIALFHALFITYLFGMIAYFI) traverse the membrane as a helical segment. Heme b is bound at residue His-276. The Cytoplasmic portion of the chain corresponds to 292–302 (LLMLRTTRSLK).

Belongs to the COX15/CtaA family. Type 1 subfamily. In terms of assembly, interacts with CtaB. The cofactor is heme b.

Its subcellular location is the cell membrane. The enzyme catalyses Fe(II)-heme o + 2 A + H2O = Fe(II)-heme a + 2 AH2. It participates in porphyrin-containing compound metabolism; heme A biosynthesis; heme A from heme O: step 1/1. Its function is as follows. Catalyzes the conversion of heme O to heme A by two successive hydroxylations of the methyl group at C8. The first hydroxylation forms heme I, the second hydroxylation results in an unstable dihydroxymethyl group, which spontaneously dehydrates, resulting in the formyl group of heme A. This is Heme A synthase from Staphylococcus epidermidis (strain ATCC 12228 / FDA PCI 1200).